Here is a 288-residue protein sequence, read N- to C-terminus: T-lymphocyte activation antigen CD80 (288 aa).

The N-terminal stretch at 1 to 34 (MGHTRRQGTSPSKCPYLNFFQLLVLAGLSHFCSG) is a signal peptide. Residues 35–135 (VIHVTKEVKE…FKREHLAEVT (101 aa)) enclose the Ig-like V-type domain. The Extracellular portion of the chain corresponds to 35–242 (VIHVTKEVKE…TTKQEHFPDN (208 aa)). 2 cysteine pairs are disulfide-bonded: C50-C116 and C162-C216. Residues N53, N89, N98, N186, N207, N211, N226, and N232 are each glycosylated (N-linked (GlcNAc...) asparagine). In terms of domain architecture, Ig-like C2-type spans 145–230 (PSISDFEIPT…GHLRVNQTFN (86 aa)). Residues 243 to 263 (LLPSWAITLISVNGIFVICCL) form a helical membrane-spanning segment. S-palmitoyl cysteine attachment occurs at residues C261, C262, C266, and C271. Residues 264–288 (TYCFAPRCRERRRNERLRRESVRPV) are Cytoplasmic-facing. Phosphoserine is present on S284.

In terms of assembly, homodimer. Interacts with CTLA4; this interaction inhibits T-cell activation. Interacts with PDL1/CD274; this interaction blocks PDL1/PDCD1 binding and thus PDL1/CD274 inhibitory function. Interacts with CD28. As to quaternary structure, (Microbial infection) Interacts with adenovirus subgroup B fiber proteins. (Microbial infection) Interacts with Orthopoxvirus OPG038/M2 protein, inhibiting the interaction with CTLA4/CD152. In terms of processing, palmitoylated by ZDHHC20; palmitoylation protects CD80 from ubiquitin-mediated degradation, regulating the protein stability, and ensures its accurate plasma membrane localization. Expressed on activated B-cells, macrophages and dendritic cells.

The protein localises to the cell membrane. Costimulatory molecule that belongs to the immunoglobulin superfamily that plays an important role in T-lymphocyte activation. Acts as the primary auxiliary signal augmenting the MHC/TCR signal in naive T-cells together with the CD28 receptor which is constitutively expressed on the cell surface of T-cells. In turn, activates different signaling pathways such as NF-kappa-B or MAPK leading to the production of different cytokines. In addition, CD28/CD80 costimulatory signal stimulates glucose metabolism and ATP synthesis of T-cells by activating the PI3K/Akt signaling pathway. Also acts as a regulator of PDL1/PDCD1 interactions to limit excess engagement of PDL1 and its inhibitory role in immune responses. Expressed on B-cells, plays a critical role in regulating interactions between B-cells and T-cells in both early and late germinal center responses, which are crucial for the generation of effective humoral immune responses. In terms of biological role, (Microbial infection) Acts as a receptor for adenovirus subgroup B. The polypeptide is T-lymphocyte activation antigen CD80 (CD80) (Homo sapiens (Human)).